The chain runs to 131 residues: Profilin-4 (131 aa).

This sequence belongs to the profilin family. Occurs in many kinds of cells as a complex with monomeric actin in a 1:1 ratio.

Its subcellular location is the cytoplasm. The protein resides in the cytoskeleton. In terms of biological role, binds to actin and affects the structure of the cytoskeleton. At high concentrations, profilin prevents the polymerization of actin, whereas it enhances it at low concentrations. By binding to PIP2, it inhibits the formation of IP3 and DG. The sequence is that of Profilin-4 from Hevea brasiliensis (Para rubber tree).